Here is a 254-residue protein sequence, read N- to C-terminus: Ribosomal RNA small subunit methyltransferase G (254 aa).

Residues Gly84, Phe89, 136-137, and Arg155 each bind S-adenosyl-L-methionine; that span reads VE.

Belongs to the methyltransferase superfamily. RNA methyltransferase RsmG family.

The protein localises to the cytoplasm. Its function is as follows. Specifically methylates the N7 position of a guanine in 16S rRNA. The protein is Ribosomal RNA small subunit methyltransferase G of Synechococcus sp. (strain CC9311).